The following is a 778-amino-acid chain: Phenylalanine--tRNA ligase beta subunit (778 aa).

Residues 39–150 (YEVPQKIVFG…GKYKIGEEVS (112 aa)) enclose the tRNA-binding domain. One can recognise a B5 domain in the interval 391-467 (HEDKIISLNK…RLVGIDNIPS (77 aa)). Mg(2+)-binding residues include aspartate 445, aspartate 451, glutamate 454, and glutamate 455. An FDX-ACB domain is found at 686-778 (SKYQASFRDL…LKNQLGVGIR (93 aa)).

Belongs to the phenylalanyl-tRNA synthetase beta subunit family. Type 1 subfamily. Tetramer of two alpha and two beta subunits. The cofactor is Mg(2+).

Its subcellular location is the cytoplasm. The enzyme catalyses tRNA(Phe) + L-phenylalanine + ATP = L-phenylalanyl-tRNA(Phe) + AMP + diphosphate + H(+). The chain is Phenylalanine--tRNA ligase beta subunit from Sulfurimonas denitrificans (strain ATCC 33889 / DSM 1251) (Thiomicrospira denitrificans (strain ATCC 33889 / DSM 1251)).